The following is a 473-amino-acid chain: Myocyte-specific enhancer factor 2C (473 aa).

An MADS-box domain is found at 1–61 (MGRKKIQITR…NKLFQYASTD (61 aa)). An N6-acetyllysine modification is found at K4. A DNA-binding region (mef2-type) is located at residues 58 to 86 (ASTDMDKVLLKYTEYNEPHESRTNSDIVE). Residue S59 is modified to Phosphoserine; by CK2. Positions 91 to 116 (KGLNGCDSPDPDADDSVGHSPESEDK) are disordered. Phosphoserine occurs at positions 98, 106, and 110. N6-acetyllysine is present on residues K116 and K119. Residues 180 to 206 (NSMSPGVTHRPPSAGNTGGLMGGDLTS) form a disordered region. Residues S222 and S228 each carry the phosphoserine modification. Residues K234 and K239 each carry the N6-acetyllysine modification. S240 is modified (phosphoserine). 2 positions are modified to N6-acetyllysine: K252 and K264. The segment at 271 to 278 (SEDVDLLL) is beta domain. A phosphothreonine; by MAPK14 mark is found at T293 and T300. The segment at 368–399 (ACTSTHLSQSSNLSLPSTQSLNIKSEPVSPPR) is transcription repressor. Positions 375-390 (SQSSNLSLPSTQSLNI) are enriched in polar residues. Residues 375 to 473 (SQSSNLSLPS…RMRLSEGWAT (99 aa)) form a disordered region. A Glycyl lysine isopeptide (Lys-Gly) (interchain with G-Cter in SUMO) cross-link involves residue K391. Phosphoserine; by CDK5 is present on S396. At S419 the chain carries Phosphoserine; by MAPK7. Positions 419 to 432 (SPVDSLSSCSSSYD) are enriched in low complexity. Residues 433-443 (GSDREDHRNEF) are compositionally biased toward basic and acidic residues. Residue S445 is modified to Phosphoserine.

This sequence belongs to the MEF2 family. Forms a complex with class II HDACs in undifferentiating cells. On myogenic differentiation, HDACs are released into the cytoplasm allowing MEF2s to interact with other proteins for activation. Interacts with EP300 in differentiating cells; the interaction acetylates MEF2C leading to increased DNA binding and activation. Interacts with HDAC7 and CARM1. Interacts with HDAC4 and HDAC9; the interaction with HDACs represses transcriptional activity. Interacts with LPIN1. Interacts with MYOCD. Interacts with AKAP13. Interacts with FOXK1; the interaction inhibits MEF2C transactivation activity. Interacts (via N-terminus) with HABP4; this interaction decreases DNA-binding activity of MEF2C in myocardial cells in response to mechanical stress. Interacts with JPH2; interaction specifically takes place with the Junctophilin-2 N-terminal fragment cleavage product of JPH2. Interacts (via MADS box) with SOX18. Interacts with PHF7; the interaction promotes MEF2C binding to its transcription targets. Post-translationally, phosphorylated on Ser-59; which enhances DNA binding activity. Phosphorylated on Ser-396; which is required for Lys-391 sumoylation and inhibits transcriptional activity. In terms of processing, acetylated by p300 on several sites in diffentiating myocytes. Acetylation on Lys-4 increases DNA binding and transactivation. Sumoylated on Lys-391 with SUMO2 but not SUMO1; which represses transcriptional activity. Post-translationally, proteolytically cleaved in cerebellar granule neurons on several sites by caspase 3 and caspase 7 following neurotoxicity. Preferentially cleaves the CDK5-mediated hyperphosphorylated form which leads to neuron apoptosis and transcriptional inactivation. Expressed in the heart. Expressed in cardiac myocytes (at protein level).

It is found in the nucleus. It localises to the cytoplasm. Its subcellular location is the sarcoplasm. In terms of biological role, transcription activator which binds specifically to the MEF2 element present in the regulatory regions of many muscle-specific genes. Controls cardiac morphogenesis and myogenesis, and is also involved in vascular development. Enhances transcriptional activation mediated by SOX18. Plays an essential role in hippocampal-dependent learning and memory by suppressing the number of excitatory synapses and thus regulating basal and evoked synaptic transmission. Crucial for normal neuronal development, distribution, and electrical activity in the neocortex. Necessary for proper development of megakaryocytes and platelets and for bone marrow B-lymphopoiesis. Required for B-cell survival and proliferation in response to BCR stimulation, efficient IgG1 antibody responses to T-cell-dependent antigens and for normal induction of germinal center B-cells. May also be involved in neurogenesis and in the development of cortical architecture. The polypeptide is Myocyte-specific enhancer factor 2C (Rattus norvegicus (Rat)).